The primary structure comprises 196 residues: CAG pathogenicity island protein 13 (196 aa).

In Helicobacter pylori (strain ATCC 700392 / 26695) (Campylobacter pylori), this protein is CAG pathogenicity island protein 13 (cagS).